A 402-amino-acid chain; its full sequence is N-acetyllactosaminide beta-1,6-N-acetylglucosaminyl-transferase (402 aa).

At 1–7 (MMGSWKH) the chain is on the cytoplasmic side. A helical; Signal-anchor for type II membrane protein membrane pass occupies residues 8-23 (CLFSASLISALIFVFV). Topologically, residues 24 to 400 (YNTELWENKR…QSETAIQPSW (377 aa)) are lumenal. An N-linked (GlcNAc...) asparagine glycan is attached at Asn41.

This sequence belongs to the glycosyltransferase 14 family. As to expression, expressed in lens epithelium cells. In terms of tissue distribution, expressed in reticulocytes.

Its subcellular location is the golgi apparatus membrane. It carries out the reaction a beta-D-Gal-(1-&gt;4)-beta-D-GlcNAc-(1-&gt;3)-beta-D-Gal-(1-&gt;4)-beta-D-GlcNAc derivative + UDP-N-acetyl-alpha-D-glucosamine = a beta-D-Gal-(1-&gt;4)-beta-D-GlcNAc-(1-&gt;3)-[beta-D-GlcNAc-(1-&gt;6)]-beta-D-Gal-(1-&gt;4)-N-acetyl-beta-D-glucosaminyl derivative + UDP + H(+). Its pathway is protein modification; protein glycosylation. Functionally, branching enzyme that converts linear into branched poly-N-acetyllactosaminoglycans. Introduces the blood group I antigen during embryonic development. It is closely associated with the development and maturation of erythroid cells. In terms of biological role, determines the expression of the blood group I antigen in erythrocytes. The protein is N-acetyllactosaminide beta-1,6-N-acetylglucosaminyl-transferase (GCNT2) of Homo sapiens (Human).